The primary structure comprises 349 residues: NADP-dependent alcohol dehydrogenase C 1 (349 aa).

The Zn(2+) site is built by cysteine 41, histidine 63, cysteine 94, cysteine 97, cysteine 100, cysteine 108, and cysteine 159. An Isoglutamyl lysine isopeptide (Lys-Gln) (interchain with Q-Cter in protein Pup) cross-link involves residue lysine 210.

It belongs to the zinc-containing alcohol dehydrogenase family. Zn(2+) serves as cofactor.

It carries out the reaction a primary alcohol + NADP(+) = an aldehyde + NADPH + H(+). In terms of biological role, prefers aldehydes over alcohols. This is NADP-dependent alcohol dehydrogenase C 1 (adhc1) from Mycolicibacterium smegmatis (strain ATCC 700084 / mc(2)155) (Mycobacterium smegmatis).